A 468-amino-acid polypeptide reads, in one-letter code: RUS family member 1 (468 aa).

Ala2 bears the N-acetylalanine mark. At Thr49 the chain carries Phosphothreonine. The chain crosses the membrane as a helical span at residues 247 to 267 (LLMLPLVSGCPGFSLGCFFFL).

This sequence belongs to the RUS1 family.

It is found in the membrane. The sequence is that of RUS family member 1 from Homo sapiens (Human).